A 315-amino-acid chain; its full sequence is MYDWLNALPKAELHLHLEGSLEPELLFALAERNKIALPWADVETLRGAYAFNNLQEFLDLYYQGADVLRTEQDFYDLTWAYLQRCKAQNVIHTEPFFDPQTHTDRGIAFEVVLNGISQALKDGREQLGISSGLILSFLRHLSEDEAQKTLDQALPFRDAFIAVGLDSSEMGHPPSKFQRVFDRARSEGFVAVAHAGEEGPPEYIWEALDLLKIKRIDHGVRAIEDERLMQRIIDEQIPLTVCPLSNTKLCVFDHMSQHNILDMLERGVKVTVNSDDPAYFGGYVTENFHALHTHLGMTEDQARRLAQNSLDARLV.

3 residues coordinate Zn(2+): H14, H16, and H194. E197 functions as the Proton donor in the catalytic mechanism. D275 provides a ligand contact to Zn(2+). D276 is a substrate binding site.

It belongs to the metallo-dependent hydrolases superfamily. Adenosine and AMP deaminases family. Adenine deaminase type 2 subfamily. Zn(2+) is required as a cofactor.

The enzyme catalyses adenine + H2O + H(+) = hypoxanthine + NH4(+). Its function is as follows. Catalyzes the hydrolytic deamination of adenine to hypoxanthine. Plays an important role in the purine salvage pathway and in nitrogen catabolism. This chain is Adenine deaminase, found in Pseudomonas putida (strain ATCC 47054 / DSM 6125 / CFBP 8728 / NCIMB 11950 / KT2440).